The following is a 117-amino-acid chain: Immunoglobulin kappa variable 1-5 (117 aa).

The signal sequence occupies residues 1–22 (MDMRVPAQLLGLLLLWLPGAKC). The interval 23-45 (DIQMTQSPSTLSASVGDRVTITC) is framework-1. An Ig-like domain is found at 24-117 (IQMTQSPSTL…YYCQQYNSYS (94 aa)). An intrachain disulfide couples C45 to C110. The tract at residues 46 to 56 (RASQSISSWLA) is complementarity-determining-1. The segment at 57–71 (WYQQKPGKAPKLLIY) is framework-2. Residues 72–78 (KASSLES) form a complementarity-determining-2 region. The framework-3 stretch occupies residues 79 to 110 (GVPSRFSGSGSGTEFTLTISSLQPDDFATYYC). The segment at 111–117 (QQYNSYS) is complementarity-determining-3.

In terms of assembly, immunoglobulins are composed of two identical heavy chains and two identical light chains; disulfide-linked.

It localises to the secreted. Its subcellular location is the cell membrane. Its function is as follows. V region of the variable domain of immunoglobulin light chains that participates in the antigen recognition. Immunoglobulins, also known as antibodies, are membrane-bound or secreted glycoproteins produced by B lymphocytes. In the recognition phase of humoral immunity, the membrane-bound immunoglobulins serve as receptors which, upon binding of a specific antigen, trigger the clonal expansion and differentiation of B lymphocytes into immunoglobulins-secreting plasma cells. Secreted immunoglobulins mediate the effector phase of humoral immunity, which results in the elimination of bound antigens. The antigen binding site is formed by the variable domain of one heavy chain, together with that of its associated light chain. Thus, each immunoglobulin has two antigen binding sites with remarkable affinity for a particular antigen. The variable domains are assembled by a process called V-(D)-J rearrangement and can then be subjected to somatic hypermutations which, after exposure to antigen and selection, allow affinity maturation for a particular antigen. The chain is Immunoglobulin kappa variable 1-5 from Homo sapiens (Human).